The chain runs to 765 residues: Probable dipeptidyl peptidase 4 (765 aa).

An N-terminal signal peptide occupies residues 1 to 14; that stretch reads MKWSILLLVGCAAA. Residues N35, N78, N101, N110, N169, N218, N465, and N490 are each glycosylated (N-linked (GlcNAc...) asparagine). Residue S613 is the Charge relay system of the active site. N-linked (GlcNAc...) asparagine glycosylation occurs at N665. Catalysis depends on charge relay system residues D690 and H725.

Belongs to the peptidase S9B family.

It is found in the secreted. It catalyses the reaction Release of an N-terminal dipeptide, Xaa-Yaa-|-Zaa-, from a polypeptide, preferentially when Yaa is Pro, provided Zaa is neither Pro nor hydroxyproline.. Functionally, extracellular dipeptidyl-peptidase which removes N-terminal dipeptides sequentially from polypeptides having unsubstituted N-termini provided that the penultimate residue is proline. The protein is Probable dipeptidyl peptidase 4 (dpp4) of Neosartorya fischeri (strain ATCC 1020 / DSM 3700 / CBS 544.65 / FGSC A1164 / JCM 1740 / NRRL 181 / WB 181) (Aspergillus fischerianus).